A 246-amino-acid polypeptide reads, in one-letter code: Protein-lysine N-methyltransferase EFM6 (246 aa).

Residues Trp51, 87–89 (GSG), Asp115, Trp143, and Ala169 contribute to the S-adenosyl-L-methionine site.

It belongs to the class I-like SAM-binding methyltransferase superfamily. METTL21 family. EFM6 subfamily.

The protein localises to the cytoplasm. In terms of biological role, S-adenosyl-L-methionine-dependent protein-lysine N-methyltransferase that methylates elongation factor 1-alpha (TEF1 and TEF2) at 'Lys-390'. In Saccharomyces cerevisiae (strain ATCC 204508 / S288c) (Baker's yeast), this protein is Protein-lysine N-methyltransferase EFM6.